The sequence spans 241 residues: DNA protection during starvation protein 2 (241 aa).

Residues 25-65 (GAQSAGNGVPSTNVNTPAPNTGQSTAQNTNTASPLPYNRAT) form a disordered region. Residues 33–57 (VPSTNVNTPAPNTGQSTAQNTNTAS) show a composition bias toward polar residues. Fe cation-binding residues include histidine 100, aspartate 127, and glutamate 131. The segment covering 220–229 (TPTDPNTGFD) has biased composition (polar residues). Residues 220 to 241 (TPTDPNTGFDINNGKPVPLRGR) are disordered.

The protein belongs to the Dps family. As to quaternary structure, homododecamer. The 12 subunits form a hollow sphere into which the mineral iron core of up to 500 Fe(3+) can be deposited.

The protein resides in the cytoplasm. It carries out the reaction 2 Fe(2+) + H2O2 + 2 H(+) = 2 Fe(3+) + 2 H2O. Protects DNA from oxidative damage by sequestering intracellular Fe(2+) ion and storing it in the form of Fe(3+) oxyhydroxide mineral. One hydrogen peroxide oxidizes two Fe(2+) ions, which prevents hydroxyl radical production by the Fenton reaction. The polypeptide is DNA protection during starvation protein 2 (dps2) (Deinococcus radiodurans (strain ATCC 13939 / DSM 20539 / JCM 16871 / CCUG 27074 / LMG 4051 / NBRC 15346 / NCIMB 9279 / VKM B-1422 / R1)).